Consider the following 254-residue polypeptide: Kallikrein-4 (254 aa).

An N-terminal signal peptide occupies residues 1 to 26; the sequence is MATAGNPWGWFLGYLILGVAGSLVSG. The propeptide occupies 27–30; that stretch reads SCSQ. In terms of domain architecture, Peptidase S1 spans 31 to 252; the sequence is IINGEDCSPH…FTEWIEKTVQ (222 aa). 6 disulfides stabilise this stretch: cysteine 37–cysteine 167, cysteine 56–cysteine 72, cysteine 141–cysteine 241, cysteine 148–cysteine 213, cysteine 178–cysteine 192, and cysteine 203–cysteine 228. Zn(2+) is bound at residue histidine 40. The Charge relay system role is filled by histidine 71. Glutamate 91 contacts Zn(2+). Aspartate 116 (charge relay system) is an active-site residue. N-linked (GlcNAc...) asparagine glycosylation is present at asparagine 169. Serine 207 acts as the Charge relay system in catalysis.

It belongs to the peptidase S1 family. Kallikrein subfamily. N-glycosylated. The N-glycan structures are of complex diantennary or triantennary type, which may be further modified with up to 2 sialic acid residues. Expressed in prostate.

The protein localises to the secreted. Its function is as follows. Has a major role in enamel formation. Required during the maturation stage of tooth development for clearance of enamel proteins and normal structural patterning of the crystalline matrix. This is Kallikrein-4 (KLK4) from Homo sapiens (Human).